Here is a 196-residue protein sequence, read N- to C-terminus: MGRRKVEIKRIENKSSRQVTFSKRRKGLIEKARQLSILCESSIAVVAVSGSGKLYDSASGDNMSKIIDRYEIHHADELKALDLAEKIRNYLPHKELLEIVQSKLEESNVDNVSVDSLISMEEQLETALSVIRAKKTELMMEDMKSLQEREKLLIEENQILASQVGKKTFLVIEGDRGMSRENGSGNKVPETLSLLK.

The MADS-box domain occupies 1–61; sequence MGRRKVEIKR…GKLYDSASGD (61 aa). The Nuclear localization signal signature appears at 8–15; sequence IKRIENKS. The K-box domain maps to 80-170; the sequence is ALDLAEKIRN…ASQVGKKTFL (91 aa).

In terms of tissue distribution, mostly expressed in roots, leaves and flowers, and, to a lower extent, in inflorescence, siliques, pollen and shoots.

The protein resides in the nucleus. Functionally, probable transcription factor involved in the negative regulation of flowering time, probably through the photoperiodic and vernalization pathways; more efficient in cv. Landsberg erecta than in cv. Columbia background. Prevents premature flowering. Involved in the modulation of vernalization impact on flowering according to genotype acclimation to altitude. This is Agamous-like MADS-box protein AGL70 from Arabidopsis thaliana (Mouse-ear cress).